The sequence spans 227 residues: UPF0758 protein Dred_2549 (227 aa).

The 123-residue stretch at 105–227 (IIRCPEDVCG…FTSLKSKGLI (123 aa)) folds into the MPN domain. Zn(2+) contacts are provided by His-176, His-178, and Asp-189. Residues 176–189 (HNHPSGDPTPSRED) carry the JAMM motif motif.

The protein belongs to the UPF0758 family.

This Desulforamulus reducens (strain ATCC BAA-1160 / DSM 100696 / MI-1) (Desulfotomaculum reducens) protein is UPF0758 protein Dred_2549.